A 491-amino-acid polypeptide reads, in one-letter code: UDP-N-acetylmuramate--L-alanine ligase (491 aa).

Residue 126–132 (GTHGKTT) coordinates ATP.

Belongs to the MurCDEF family.

It localises to the cytoplasm. It carries out the reaction UDP-N-acetyl-alpha-D-muramate + L-alanine + ATP = UDP-N-acetyl-alpha-D-muramoyl-L-alanine + ADP + phosphate + H(+). It functions in the pathway cell wall biogenesis; peptidoglycan biosynthesis. In terms of biological role, cell wall formation. The chain is UDP-N-acetylmuramate--L-alanine ligase from Klebsiella pneumoniae subsp. pneumoniae (strain ATCC 700721 / MGH 78578).